Consider the following 63-residue polypeptide: SERF-like protein C1705.02 (63 aa).

Basic and acidic residues predominate over residues M1–R13. Residues M1–K63 are disordered. The span at N14 to K24 shows a compositional bias: basic residues. A compositionally biased stretch (basic and acidic residues) spans Q25–A35.

The protein belongs to the SERF family.

The protein localises to the cytoplasm. Its subcellular location is the nucleus. It is found in the nucleolus. The polypeptide is SERF-like protein C1705.02 (Schizosaccharomyces pombe (strain 972 / ATCC 24843) (Fission yeast)).